We begin with the raw amino-acid sequence, 923 residues long: Protocadherin gamma-B5 (923 aa).

Residues 1-30 (MGSGAGELGRAERLPVLFLFLLSLFCPALC) form the signal peptide. Cadherin domains follow at residues 31 to 133 (EQIR…TPKF), 134 to 242 (TQNS…PPVF), 243 to 343 (NRDV…SPEV), 344 to 448 (TFHS…APVF), 449 to 558 (HQAS…APRV), and 566 to 671 (DGSA…LPDI). At 31 to 687 (EQIRYRIPEE…SDPQAELQFY (657 aa)) the chain is on the extracellular side. N-linked (GlcNAc...) asparagine glycans are attached at residues N415 and N541. Residues 688 to 708 (LVVALALISVLFLLAVILAVA) form a helical membrane-spanning segment. Over 709-923 (LRLRRSSSPA…KKKSGKKEKK (215 aa)) the chain is Cytoplasmic. Disordered regions lie at residues 794–832 (TSHPELQAPPNTDWRFSQAQRPGTSGSQNGDDTGTWPNN) and 893–923 (ATLTNAAGKRDGKAPAGGNGNKKKSGKKEKK). Positions 807–832 (WRFSQAQRPGTSGSQNGDDTGTWPNN) are enriched in polar residues. Residues 913–923 (NKKKSGKKEKK) are compositionally biased toward basic residues.

It is found in the cell membrane. In terms of biological role, potential calcium-dependent cell-adhesion protein. May be involved in the establishment and maintenance of specific neuronal connections in the brain. This chain is Protocadherin gamma-B5 (PCDHGB5), found in Homo sapiens (Human).